Consider the following 342-residue polypeptide: Protein-ribulosamine 3-kinase, chloroplastic (342 aa).

Residues Met1 to Met46 constitute a chloroplast transit peptide. Glu141–Ile143 contacts ATP. Catalysis depends on Asp246, which acts as the Proton acceptor.

This sequence belongs to the fructosamine kinase family.

The protein resides in the plastid. The protein localises to the chloroplast. It carries out the reaction N(6)-D-ribulosyl-L-lysyl-[protein] + ATP = N(6)-(3-O-phospho-D-ribulosyl)-L-lysyl-[protein] + ADP + H(+). It catalyses the reaction N(6)-(D-erythrulosyl)-L-lysyl-[protein] + ATP = N(6)-(3-O-phospho-D-erythrulosyl)-L-lysyl-[protein] + ADP + H(+). Initiates a process leading to the deglycation of proteins. Phosphorylates low-molecular-mass and protein-bound erythrulosamines and ribulosamines, but not fructosamines or psicosamines, on the third carbon of the sugar moiety. Protein-bound erythrulosamine 3-phosphates and ribulosamine 3-phosphates are unstable and decompose under physiological conditions. This Oryza sativa subsp. indica (Rice) protein is Protein-ribulosamine 3-kinase, chloroplastic.